The primary structure comprises 754 residues: ATP-dependent RNA helicase DRS1 (754 aa).

Disordered stretches follow at residues 1–61 (MVVG…NLDE) and 119–227 (GLVK…GDEA). The span at 19–34 (DSEDDVPILDSSDDEK) shows a compositional bias: acidic residues. A compositionally biased stretch (basic residues) spans 40 to 51 (TTKKRKGKNNKK). Residues 124-142 (AHIDSKQEEETEKEKVEKE) are compositionally biased toward basic and acidic residues. Composition is skewed to acidic residues over residues 167–193 (NQSE…QEEM) and 202–211 (DEIDEEDDSE). Ser-210 is modified (phosphoserine). The short motif at 233-261 (ENFNSLSLSRPVLKGLASLGYVKPSPIQS) is the Q motif element. Residues 264-439 (IPIALLGKDI…SLSLKKPVRI (176 aa)) form the Helicase ATP-binding domain. Position 277-284 (277-284 (AVTGSGKT)) interacts with ATP. Positions 387–390 (DEAD) match the DEAD box motif. Residues 450–641 (KLTQEFVRIR…SMNDTIEDIL (192 aa)) form the Helicase C-terminal domain. A coiled-coil region spans residues 623 to 669 (IEETNKLVESMNDTIEDILVEEKEEKEILRAEMQLRKGENMLKHKKE). Residues 675–754 (RRTWFQSESD…NKKKGFKSRR (80 aa)) are disordered. The span at 696-707 (RNKKVTNSKKRK) shows a compositional bias: basic residues. Basic and acidic residues predominate over residues 724 to 736 (TKTDRIADQERTF). Basic residues predominate over residues 737 to 754 (KKQKSTNSNKKKGFKSRR).

It belongs to the DEAD box helicase family. DDX27/DRS1 subfamily. In terms of assembly, interacts with RRP1 and associates with pre-ribosomal particles.

Its subcellular location is the nucleus. The protein localises to the nucleolus. The enzyme catalyses ATP + H2O = ADP + phosphate + H(+). Functionally, ATP-binding RNA helicase involved in ribosome assembly. The sequence is that of ATP-dependent RNA helicase DRS1 (DRS1) from Saccharomyces cerevisiae (strain YJM789) (Baker's yeast).